The primary structure comprises 354 residues: Ferrochelatase (354 aa).

Fe cation contacts are provided by His-214 and Glu-295.

This sequence belongs to the ferrochelatase family.

The protein resides in the cytoplasm. It catalyses the reaction heme b + 2 H(+) = protoporphyrin IX + Fe(2+). It participates in porphyrin-containing compound metabolism; protoheme biosynthesis; protoheme from protoporphyrin-IX: step 1/1. In terms of biological role, catalyzes the ferrous insertion into protoporphyrin IX. This chain is Ferrochelatase, found in Burkholderia ambifaria (strain MC40-6).